The chain runs to 198 residues: NAD(P)H dehydrogenase (quinone) (198 aa).

The region spanning 4-190 is the Flavodoxin-like domain; it reads ILVLYYSMYG…ILASFQGAHV (187 aa). Residues 10-15 and 79-81 contribute to the FMN site; these read SMYGHI and TRF. Tyr12 is an NAD(+) binding site. Trp99 provides a ligand contact to substrate. Residues 114–119 and His134 contribute to the FMN site; that span reads STGTGG.

The protein belongs to the WrbA family. FMN is required as a cofactor.

The catalysed reaction is a quinone + NADH + H(+) = a quinol + NAD(+). It carries out the reaction a quinone + NADPH + H(+) = a quinol + NADP(+). The chain is NAD(P)H dehydrogenase (quinone) from Azotobacter vinelandii (strain DJ / ATCC BAA-1303).